A 274-amino-acid polypeptide reads, in one-letter code: Factor H binding protein (274 aa).

A signal peptide spans 1–19 (MNRTAFCCLSLTTALILTA). Cys-20 carries the N-palmitoyl cysteine lipid modification. Cys-20 carries the S-diacylglycerol cysteine lipid modification. The tract at residues 27-119 (VAADIGAGLA…LESGEFQVYK (93 aa)) is domain A. The segment at 120–183 (QSHSALTAFQ…TAFGSDDAGG (64 aa)) is domain B. Residues 184 to 274 (KLTYTIDFAA…IRHIGLAAKQ (91 aa)) are domain C.

Belongs to the factor H binding-protein family. As to quaternary structure, binds to host factor H (fH from human). Both fHbp beta-barrels contact Sushi domains 6 and 7 in fH (also called complement control protein domains, CCP). This interaction probably mimics the normal (carbohydrate-dependent) mode of fH recruitement, regulating fH activity. Sucrose octasulphate inhibits the fHbp-fH interaction. In terms of processing, protein is lipidated in N.meningitidis upon growth in radioactive palmitic acid, probably on Cys-20.

It is found in the cell outer membrane. It localises to the secreted. The protein resides in the extracellular vesicle. The protein localises to the bacterial extracellular vesicle. Functionally, a bacterial surface lipoprotein that binds host (human) complement factor H (fH, gene CFH), binding contributes to the avoidance of complement-mediated lysis by N.meningitidis. Binding of fH to the bacteria surface is independent of bacterial sialic acid moieties. fH binding affinity is high enough that it may sequester plasma fH, depleting its circulating levels and de-regulating complement in the host. This protein induces high levels of bactericidal antibodies in mice. This is Factor H binding protein (fhbP) from Neisseria meningitidis serogroup B (strain ATCC BAA-335 / MC58).